The following is a 371-amino-acid chain: Putative glutamate--cysteine ligase 2 (371 aa).

Belongs to the glutamate--cysteine ligase type 2 family. YbdK subfamily.

It catalyses the reaction L-cysteine + L-glutamate + ATP = gamma-L-glutamyl-L-cysteine + ADP + phosphate + H(+). In terms of biological role, ATP-dependent carboxylate-amine ligase which exhibits weak glutamate--cysteine ligase activity. The chain is Putative glutamate--cysteine ligase 2 from Burkholderia thailandensis (strain ATCC 700388 / DSM 13276 / CCUG 48851 / CIP 106301 / E264).